The following is a 392-amino-acid chain: Phosphoglycerate kinase (392 aa).

Substrate contacts are provided by residues 21–23 (DLN), arginine 36, 59–62 (HRGR), arginine 113, and arginine 146. Residues lysine 197, glutamate 314, and 340–343 (GGDT) contribute to the ATP site.

It belongs to the phosphoglycerate kinase family. In terms of assembly, monomer.

It is found in the cytoplasm. It carries out the reaction (2R)-3-phosphoglycerate + ATP = (2R)-3-phospho-glyceroyl phosphate + ADP. It participates in carbohydrate degradation; glycolysis; pyruvate from D-glyceraldehyde 3-phosphate: step 2/5. This Vesicomyosocius okutanii subsp. Calyptogena okutanii (strain HA) protein is Phosphoglycerate kinase.